The following is a 1207-amino-acid chain: Brassinosteroid LRR receptor kinase (1207 aa).

The signal sequence occupies residues 1 to 34; that stretch reads MKAHKTVFNQHPLSLNKLFFVLLLIFFLPPASPA. The short motif at 71 to 78 is the Cys pair 1 element; that stretch reads CSFTGVSC. LRR repeat units follow at residues 109–131, 135–157, 161–181, 186–207, 213–234, 235–257, 258–280, 282–304, 305–325, 329–350, 353–374, 378–400, 402–423, 428–450, 452–474, 476–499, 500–523, 524–547, 548–570, and 572–594; these read NLESLVLKNANLSGSLTSAAKSQ, TLDSIDLAENTISGPISDISSFG, NLKSLNLSKNFLDPPGKEMLK, SLQVLDLSYNNISGFNLFPWVS, ELEFFSLKGNKLAGSIPELDFK, NLSYLDLSANNFSTVFPSFKDCS, NLQHLDLSSNKFYGDIGSSLSSC, KLSFLNLTNNQFVGLVPKLPSES, LQYLYLRGNDFQGVYPNQLAD, TVVELDLSYNNFSGMVPESLGE, SLELVDISYNNFSGKLPVDTLS, NIKTMVLSFNKFVGGLPDSFSNL, KLETLDMSSNNLTGVIPSGICK, NLKVLYLQNNLFKGPIPDSLSNC, QLVSLDLSFNYLTGSIPSSLGSL, KLKDLILWLNQLSGEIPQELMYLQ, ALENLILDFNDLTGPIPASLSNCT, KLNWISLSNNQLSGEIPASLGRLS, NLAILKLGNNSISGNIPAELGNC, and SLIWLDLNTNFLNGSIPPPLFKQ. An N-linked (GlcNAc...) asparagine glycan is attached at N119. Residues N166 and N196 are each glycosylated (N-linked (GlcNAc...) asparagine). N-linked (GlcNAc...) asparagine glycans are attached at residues N235 and N245. An N-linked (GlcNAc...) asparagine glycan is attached at N287. 2 N-linked (GlcNAc...) asparagine glycosylation sites follow: N339 and N363. N-linked (GlcNAc...) asparagine glycans are attached at residues N412 and N449. An N-linked (GlcNAc...) asparagine glycan is attached at N521. N556, N584, N646, and N662 each carry an N-linked (GlcNAc...) asparagine glycan. 4 LRR repeats span residues 664-686, 688-711, 712-735, and 736-758; these read SMIFLDLSYNKLEGSIPKELGAM, YLSILNLGHNDLSGMIPQQLGGLK, NVAILDLSYNRFNGTIPNSLTSLT, and LLGEIDLSNNNLSGMIPESAPFD. N724, N746, and N767 each carry an N-linked (GlcNAc...) asparagine glycan. The short motif at 771-779 is the Cys pair 2 element; sequence CGYPLPIPC. The helical transmembrane segment at 803 to 823 threads the bilayer; it reads SVAMGLLFSLFCIFGLIIVAI. In terms of domain architecture, Protein kinase spans 888–1163; that stretch reads FHNDSLVGSG…IQVMAMFKEI (276 aa). ATP contacts are provided by residues 894 to 902 and K916; that span reads VGSGGFGDV. The active-site Proton acceptor is D1014.

It belongs to the protein kinase superfamily. Ser/Thr protein kinase family.

It is found in the cell membrane. It catalyses the reaction L-seryl-[protein] + ATP = O-phospho-L-seryl-[protein] + ADP + H(+). It carries out the reaction L-threonyl-[protein] + ATP = O-phospho-L-threonyl-[protein] + ADP + H(+). Receptor with a serine/threonine-protein kinase activity. Regulates, in response to brassinosteroid binding, a signaling cascade involved in plant development, including expression of light- and stress-regulated genes, promotion of cell elongation, normal leaf and chloroplast senescence, and flowering. May be involved in a feedback regulation of brassinosteroid biosynthesis. May be also involved in the perception of systemin, a peptide hormone responsible for the systemic activation of defense genes in leaves of wounded plants. This chain is Brassinosteroid LRR receptor kinase (CURL3), found in Solanum lycopersicum (Tomato).